The following is a 530-amino-acid chain: Glutamate--cysteine ligase (530 aa).

This sequence belongs to the glutamate--cysteine ligase type 1 family. Type 1 subfamily.

It catalyses the reaction L-cysteine + L-glutamate + ATP = gamma-L-glutamyl-L-cysteine + ADP + phosphate + H(+). Its pathway is sulfur metabolism; glutathione biosynthesis; glutathione from L-cysteine and L-glutamate: step 1/2. The polypeptide is Glutamate--cysteine ligase (Pseudomonas entomophila (strain L48)).